A 302-amino-acid chain; its full sequence is Methylsterol monooxygenase erg25A (302 aa).

A glycan (N-linked (GlcNAc...) asparagine) is linked at Asn5. Helical transmembrane passes span 47-67, 105-125, and 132-152; these read NIVA…IYFS, YILL…HPMM, and FTIP…FFLL. In terms of domain architecture, Fatty acid hydroxylase spans 147 to 283; the sequence is IIFFLLEDTY…FRHWDVLMGT (137 aa). The short motif at 161 to 165 is the Histidine box-1 element; that stretch reads HRAMH. The Histidine box-2 motif lies at 174–178; the sequence is HRIHH. The chain crosses the membrane as a helical span at residues 193 to 213; it reads PWETLLLGLGTIGPPLLLALM. The Histidine box-3 motif lies at 258-264; sequence WHDDHHR. An N-linked (GlcNAc...) asparagine glycan is attached at Asn269.

Belongs to the sterol desaturase family. The cofactor is Fe cation.

Its subcellular location is the endoplasmic reticulum membrane. It functions in the pathway steroid metabolism; ergosterol biosynthesis. Functionally, sterol-C4-methyl oxidase; part of the third module of ergosterol biosynthesis pathway that includes the late steps of the pathway. Erg25A is a catalytic component of the C-4 demethylation complex that catalyzes the conversion of 4,4-dimethylfecosterol into fecosterol via 4-methylfecosterol. The third module or late pathway involves the ergosterol synthesis itself through consecutive reactions that mainly occur in the endoplasmic reticulum (ER) membrane. Firstly, the squalene synthase erg9 catalyzes the condensation of 2 farnesyl pyrophosphate moieties to form squalene, which is the precursor of all steroids. Squalene synthase is crucial for balancing the incorporation of farnesyl diphosphate (FPP) into sterol and nonsterol isoprene synthesis. Secondly, squalene is converted into lanosterol by the consecutive action of the squalene epoxidase erg1 and the lanosterol synthase erg7. Then, the delta(24)-sterol C-methyltransferase erg6 methylates lanosterol at C-24 to produce eburicol. Eburicol is the substrate of the sterol 14-alpha demethylase encoded by cyp51A and cyp51B, to yield 4,4,24-trimethyl ergosta-8,14,24(28)-trienol. The C-14 reductase erg24 then reduces the C14=C15 double bond which leads to 4,4-dimethylfecosterol. A sequence of further demethylations at C-4, involving the C-4 demethylation complex containing the C-4 methylsterol oxidases erg25A or erg25B, the sterol-4-alpha-carboxylate 3-dehydrogenase erg26 and the 3-keto-steroid reductase erg27, leads to the production of fecosterol via 4-methylfecosterol. The C-8 sterol isomerase erg2 then catalyzes the reaction which results in unsaturation at C-7 in the B ring of sterols and thus converts fecosterol to episterol. The sterol-C5-desaturase erg3B then catalyzes the introduction of a C-5 double bond in the B ring to produce 5-dehydroepisterol. The 2 other sterol-C5-desaturases, erg3A and erg3C, seem to be less important in ergosterol biosynthesis. The C-22 sterol desaturase erg5 further converts 5-dehydroepisterol into ergosta-5,7,22,24(28)-tetraen-3beta-ol by forming the C-22(23) double bond in the sterol side chain. Finally, ergosta-5,7,22,24(28)-tetraen-3beta-ol is substrate of the C-24(28) sterol reductases erg4A and erg4B to produce ergosterol. Possible alternative sterol biosynthetic pathways might exist from fecosterol to ergosterol, depending on the activities of the erg3 isoforms. The protein is Methylsterol monooxygenase erg25A of Aspergillus fumigatus (strain ATCC MYA-4609 / CBS 101355 / FGSC A1100 / Af293) (Neosartorya fumigata).